Reading from the N-terminus, the 404-residue chain is Cysteine desulfurase IscS (404 aa).

Residues 75–76 (AT), Asn-155, Gln-183, and 203–205 (SAH) each bind pyridoxal 5'-phosphate. Lys-206 carries the post-translational modification N6-(pyridoxal phosphate)lysine. Residue Thr-243 coordinates pyridoxal 5'-phosphate. Cys-328 acts as the Cysteine persulfide intermediate in catalysis. Cys-328 provides a ligand contact to [2Fe-2S] cluster.

The protein belongs to the class-V pyridoxal-phosphate-dependent aminotransferase family. NifS/IscS subfamily. As to quaternary structure, homodimer. Forms a heterotetramer with IscU, interacts with other sulfur acceptors. Requires pyridoxal 5'-phosphate as cofactor.

It is found in the cytoplasm. It carries out the reaction (sulfur carrier)-H + L-cysteine = (sulfur carrier)-SH + L-alanine. It participates in cofactor biosynthesis; iron-sulfur cluster biosynthesis. Functionally, master enzyme that delivers sulfur to a number of partners involved in Fe-S cluster assembly, tRNA modification or cofactor biosynthesis. Catalyzes the removal of elemental sulfur atoms from cysteine to produce alanine. Functions as a sulfur delivery protein for Fe-S cluster synthesis onto IscU, an Fe-S scaffold assembly protein, as well as other S acceptor proteins. In Buchnera aphidicola subsp. Acyrthosiphon pisum (strain 5A), this protein is Cysteine desulfurase IscS.